A 191-amino-acid polypeptide reads, in one-letter code: Polysulfide reductase chain B (191 aa).

4Fe-4S ferredoxin-type domains follow at residues 5 to 34 (YGMIHDENLCIGCQACNIACRSENKIPDSV), 50 to 83 (GTLSFNYHRQSCVQCENTPCVSVCPTKASYVNED), and 84 to 113 (GIVSVNVDLCVGCLYCIAACPYQARYVDPV). Residues Cys-14, Cys-17, Cys-20, Cys-24, Cys-61, Cys-64, Cys-69, Cys-73, Cys-93, Cys-96, Cys-99, Cys-103, Cys-120, Cys-123, Cys-136, and Cys-140 each coordinate [4Fe-4S] cluster.

In terms of assembly, functional polysulfide reductase is made up of three different (A, B, and C) subunits.

In terms of biological role, component of the phosphorylative electron transport system with polysulfide as the terminal acceptor. In Wolinella succinogenes (strain ATCC 29543 / DSM 1740 / CCUG 13145 / JCM 31913 / LMG 7466 / NCTC 11488 / FDC 602W) (Vibrio succinogenes), this protein is Polysulfide reductase chain B (psrB).